Consider the following 32-residue polypeptide: Photosystem I reaction center subunit XII (32 aa).

A helical transmembrane segment spans residues 9–31; sequence VYVALVSALITSFLAVRLGLALY.

The protein belongs to the PsaM family.

The protein resides in the plastid. It is found in the chloroplast thylakoid membrane. This chain is Photosystem I reaction center subunit XII, found in Chaetosphaeridium globosum (Charophycean green alga).